The primary structure comprises 279 residues: MIQTFNELGALREQIAQWKREGLRVALVPTMGNLHGGHHSLVTLARQYADKVVASIFVNPTQFGPNEDFSRYPRTPEADVAGLEQVGCDAVWLPSVEAMYPLGVDKTTQMHAPGVSEVLEGASRPGHFDGVCTVVARLFLQVQPDVAVFGRKDYQQLAVIRQMVAELSFPIQIVGADIVRDEDGLAKSSRNQYLSAEQRPVATTIHRTLLGMREGYVAGQARDRIEADATAALQAAGFQVDYAVLRTPELAEPTFDGGGRVALIAARLGSTRLIDNLEF.

ATP is bound at residue 31-38 (MGNLHGGH). The Proton donor role is filled by histidine 38. Glutamine 62 contributes to the (R)-pantoate binding site. Glutamine 62 provides a ligand contact to beta-alanine. 150-153 (GRKD) contributes to the ATP binding site. Glutamine 156 contributes to the (R)-pantoate binding site. Residues valine 179 and 187–190 (KSSR) each bind ATP.

The protein belongs to the pantothenate synthetase family. In terms of assembly, homodimer.

It localises to the cytoplasm. The enzyme catalyses (R)-pantoate + beta-alanine + ATP = (R)-pantothenate + AMP + diphosphate + H(+). Its pathway is cofactor biosynthesis; (R)-pantothenate biosynthesis; (R)-pantothenate from (R)-pantoate and beta-alanine: step 1/1. Its function is as follows. Catalyzes the condensation of pantoate with beta-alanine in an ATP-dependent reaction via a pantoyl-adenylate intermediate. The chain is Pantothenate synthetase from Stenotrophomonas maltophilia (strain K279a).